The primary structure comprises 255 residues: MKESTMAQTQARFDRVRWEPGVYAIVGATGIGKSAEASKLALSHSAPIVVADRIQCYSDLLVTSGRAFDAKVEGLNRVWLDNRTIHQGNFDPDEAFDRLIKVLTSYVDRGEAVVMEGGSISLILRFAQTISNLPFPAVVNVMPIPDRQHYFAQQCARARQMLRGDSTGRNLLTELAEAWVLGDQHNFIASVAGLDCVLDWCATHSVTPEELANRDLTTEVLDELAASMGGRYVEHGVLQQEIFLRTFGAPGVTAR.

It belongs to the isopentenyl transferase family.

The enzyme catalyses dimethylallyl diphosphate + AMP = N(6)-(dimethylallyl)adenosine 5'-phosphate + diphosphate. Transfers dimethylallyl groups to AMP as part of the biosynthesis of cytokinin phytohormones. In Rhodococcoides fascians (Rhodococcus fascians), this protein is Adenylate dimethylallyltransferase (fas4).